Here is a 340-residue protein sequence, read N- to C-terminus: MSGGFYSSPFWAGYLETQRSRLPVLPEIDDGLSHCVVRFLGYNPGSMQLQGTNTYLVGTGSTRILIDTGEGAPQWAVSVTRYLEDHDISISHVLLTHWHKDHTGGVADLLAHDPSIIVYKHAPDPGQQAIANGQTFKTQGATLRAVLTPGHAVDHMCFLLEEENALFTGDNVLGHGYSVAEDLETYTASLRLMAGLKCSVGYPGHGDAILNLPQTIARYISQRVAREKKIYAILALHACSCSSRNGGSTSSIGSVSESGDSDEEDNNMKTSRPAMQGLSTAEIGGLVYGESVKNSPTFDSAVGPLLNQVLYMLLEQGKCCDHVSILVIFQKPGFFSIPVI.

5 residues coordinate Zn(2+): His-97, His-99, Asp-101, His-102, and His-205. Asp-101 serves as the catalytic Proton donor/acceptor. Residues 242-258 (SSRNGGSTSSIGSVSES) show a composition bias toward low complexity. Residues 242 to 271 (SSRNGGSTSSIGSVSESGDSDEEDNNMKTS) form a disordered region.

This sequence belongs to the metallo-beta-lactamase superfamily. Requires Zn(2+) as cofactor.

The catalysed reaction is 3,5,7,9,11,13-hexaoxotetradecanoyl-[ACP] = dehydrocitreoisocoumarin + holo-[ACP] + H2O. It carries out the reaction 3,5,7,9,11-pentaoxododecanoyl-[ACP] = 6,8-dihydroxy-3-(2-oxopropyl)-isocoumarin + holo-[ACP] + H2O. Thioesterase; part of the pkg gene cluster that mediates the biosynthesis of dihydrocitreoisocoumarin and 6,8-dihydroxy-3-(2-oxopropyl)-isocoumarin. The non-reducing polyketide synthase pkgA performs the condensation of one acetyl-CoA starter unit with 6 and 5 malonyl-CoA units, respectively. As pkgA lacks a releasing domain, the thioesterase pkgB is necessary to break the thioester bond and release dihydrocitreoisocoumarin and 6,8-dihydroxy-3-(2-oxopropyl)-isocoumarin from pkgA. This Emericella nidulans (strain FGSC A4 / ATCC 38163 / CBS 112.46 / NRRL 194 / M139) (Aspergillus nidulans) protein is Thioesterase pkgB.